The primary structure comprises 1114 residues: Brother of CDO (1114 aa).

Residues 1–30 (MLRGTMTAWRGMRPEVTLACLLLATAGCFA) form the signal peptide. Over 31–855 (DLNEVPQVTV…MVARSSDLPY (825 aa)) the chain is Extracellular. Ig-like C2-type domains are found at residues 36–123 (PQVT…ATVT), 129–213 (DFKL…VKTS), 235–315 (PEAQ…VILY), and 323–409 (PEVT…LRTS). Disulfide bonds link Cys-57–Cys-106, Cys-150–Cys-200, Cys-252–Cys-299, and Cys-344–Cys-391. N-linked (GlcNAc...) asparagine glycans are attached at residues Asn-65, Asn-76, Asn-98, Asn-189, and Asn-275. The tract at residues 422–474 (ELATGTPPVSPSKLGNPEQMLRGQPALPRPPTSVGPASPQCPGEKGQGAPAEA) is disordered. Fibronectin type-III domains follow at residues 474-571 (APII…GRRP), 608-703 (APDR…VVSG), and 712-812 (PVAG…TKAR). Residue Asn-517 is glycosylated (N-linked (GlcNAc...) asparagine). A disordered region spans residues 577–615 (ASKEQQIQRDDPGASPQSSSQPDHGRLSPPEAPDRPTIS). Residues Asn-725 and Asn-759 are each glycosylated (N-linked (GlcNAc...) asparagine). The interval 812–833 (RKSSGQPGRLPPPTLAPPQPPL) is disordered. Residues 820–833 (RLPPPTLAPPQPPL) are compositionally biased toward pro residues. The helical transmembrane segment at 856-876 (LIVGVVLGSIVLIIVTFIPFC) threads the bilayer. Topologically, residues 877 to 1114 (LWRAWSKQKH…VSFETPPLTI (238 aa)) are cytoplasmic. The span at 972–986 (QTHLGNGYDPQSHQI) shows a compositional bias: polar residues. The disordered stretch occupies residues 972-998 (QTHLGNGYDPQSHQITRGPKSSPDEGS).

As to quaternary structure, part of a complex that contains BOC, CDON, NEO1, cadherins and CTNNB1. Interacts with NTN3. Interacts with SHH, DHH and IHH. Interacts with CDH2 and CTNNB1. Interacts with CDH15 only during the early stages of myoblast differentiation. Post-translationally, N-glycosylated. Detected in skeletal muscle, heart, thymus, kidney and small intestine. Detected at lower levels in brain, placenta, lung and colon mucosa.

The protein localises to the cell membrane. Functionally, component of a cell-surface receptor complex that mediates cell-cell interactions between muscle precursor cells. Promotes differentiation of myogenic cells. The sequence is that of Brother of CDO (BOC) from Homo sapiens (Human).